The following is a 915-amino-acid chain: Protein SLFN14 (915 aa).

A compositionally biased stretch (basic residues) spans 157–167 (AAQRGRRRLHP). Positions 157 to 176 (AAQRGRRRLHPPRASNSNLQ) are disordered. The required for endoribonuclease activity stretch occupies residues 204–389 (ESTHVEFKRF…KVLEFKGALQ (186 aa)). Positions 390-569 (RHLFPVTQKT…QLGCEFFNLL (180 aa)) are required for ribosome binding.

As to quaternary structure, associates with ribosomes in an ATP-independent manner. The cofactor is Mg(2+). Mn(2+) serves as cofactor. As to expression, detected in reticulocytes (at protein level).

The protein resides in the nucleus. In terms of biological role, shows no ribosome-associated and endoribonuclease activities. Functionally, displays polysome-associated endoribonuclease activity towards mRNAs and rRNAs. May play a role in RNA surveillance pathways by recognizing stalled ribosomes and triggering endonucleolytic cleavage of aberrant mRNAs. Cleaves RNAs in a magnesium-, manganese-dependent and ATP-independent manner. Involved in correct maturation of megakaryocytes and especially important for proplatelet extension. The protein is Protein SLFN14 of Oryctolagus cuniculus (Rabbit).